Reading from the N-terminus, the 536-residue chain is MAYRQILAIVLFLCVFQFLDCTVSSAVEENGTVFVYGRAAVGTIDEDFICATLDWWPPEKCDYGSCSWDHASILNLDLNNVILQNAIKAFAPLKIRIGGTLQDIVIYETPDSKQPCLPFTKNSSILFGYTQGCLPMRRWDELNAFFRKTGTKVIFGLNALSGRSIKSNGEAIGAWNYTNAESFIRFTAENNYTIDGWELGNELCGSGVGARVGANQYAIDTINLRNIVNRVYKNVSPMPLVIGPGGFFEVDWFTEYLNKAENSLNATTRHIYDLGPGVDEHLIEKILNPSYLDQEAKSFRSLKNIIKNSSTKAVAWVGESGGAYNSGRNLVSNAFVYSFWYLDQLGMASLYDTKTYCRQSLIGGNYGLLNTTNFTPNPDYYSALIWRQLMGRKALFTTFSGTKKIRSYTHCARQSKGITVLLMNLDNTTTVVAKVELNNSFSLRHTKHMKSYKRASSQLFGGPNGVIQREEYHLTAKDGNLHSQTMLLNGNALQVNSMGDLPPIEPIHINSTEPITIAPYSIVFVHMRNVVVPACA.

The signal sequence occupies residues 1-24 (MAYRQILAIVLFLCVFQFLDCTVS). 4 N-linked (GlcNAc...) asparagine glycosylation sites follow: Asn-30, Asn-122, Asn-176, and Asn-191. Residue Glu-202 is the Proton donor of the active site. Asn-265 and Asn-308 each carry an N-linked (GlcNAc...) asparagine glycan. Glu-319 functions as the Nucleophile in the catalytic mechanism. N-linked (GlcNAc...) asparagine glycosylation is found at Asn-370, Asn-427, Asn-438, and Asn-510.

This sequence belongs to the glycosyl hydrolase 79 family.

The protein resides in the lysosome membrane. Its subcellular location is the secreted. In terms of biological role, endoglycosidase which is a cell surface and extracellular matrix-degrading enzyme. Cleaves heparan sulfate proteoglycans (HSPGs) into heparan sulfate side chains and core proteoglycans. This is Heparanase-like protein 3 from Arabidopsis thaliana (Mouse-ear cress).